Here is a 95-residue protein sequence, read N- to C-terminus: Acylphosphatase (95 aa).

One can recognise an Acylphosphatase-like domain in the interval Arg9–Arg95. Residues Arg24 and Asn42 contribute to the active site.

The protein belongs to the acylphosphatase family.

The enzyme catalyses an acyl phosphate + H2O = a carboxylate + phosphate + H(+). The protein is Acylphosphatase (acyP) of Saccharopolyspora erythraea (strain ATCC 11635 / DSM 40517 / JCM 4748 / NBRC 13426 / NCIMB 8594 / NRRL 2338).